The primary structure comprises 227 residues: Probable septum site-determining protein MinC (227 aa).

The protein belongs to the MinC family. As to quaternary structure, interacts with MinD and FtsZ.

Functionally, cell division inhibitor that blocks the formation of polar Z ring septums. Rapidly oscillates between the poles of the cell to destabilize FtsZ filaments that have formed before they mature into polar Z rings. Prevents FtsZ polymerization. The polypeptide is Probable septum site-determining protein MinC (Laribacter hongkongensis (strain HLHK9)).